A 687-amino-acid chain; its full sequence is MLFTSTAVAALSGALLIQPALAAPNGLPSHGGSHHGPKDPFEVLDPQNWVNPDNMTWADFKSPPGTKWNDPSRKGSIRNFNIALVNVDYPDKPFTITMAPGSDVFKNPQPGSPNVTRSQVPAFYRDFLNKPGKLNRGHTLHEYWMEDSNGRFGVDLTTFGVYKMPLKSYQYGIGESMNAGACPIGETCYYEIRDDALGAWRKDIGEEKAKSFELVFILSAGQDESSTWQEFGEIMFQNKEDVTSAFGPPPGNGTGNMTLPNYAKTRYVEWTSWASASAIWPNAGDGSSTQAESSGMGTFAHELSHLLNVGDNYNNPYGKPLRRSYTGPWSMMSRGSFNGPGGPHTRWQVPPLQGGSMGSQHTFHDKIRLGLTTKDSALNISREALANSGLIVARVTARVIAPKPGDLIGIHVAMDKDKSPKCDVNTDPYCDGNGYQNYNVEVIDRMGADSFCPDSGVMLSKTRDKAFSNYQWTIDANPQDIKQVDFHRPDGTPAMISLGDYRQLADALFHAGTRSGSQYEYTDKANNLQFYIIEPHRDEAGVLSYTTAVRYVGGKDPHKRGVKLDKNAKITSSNTKPTDKGVTCSFTLHNTGTYNPAAGKAKHPQDVTAYLKSDVYRLKATVEGRGWRVEVPNALATAEFGKTVTVSVAVGAENSAQDKAKVTLTATSEADPSKFATAECKVNKFRN.

The first 22 residues, 1–22 (MLFTSTAVAALSGALLIQPALA), serve as a signal peptide directing secretion. N-linked (GlcNAc...) asparagine glycosylation is found at N54, N114, N252, N256, and N379.

The protein belongs to the peptidase M10B family.

The protein resides in the secreted. In Arthroderma benhamiae (strain ATCC MYA-4681 / CBS 112371) (Trichophyton mentagrophytes), this protein is Putative secreted metallopeptidase.